A 39-amino-acid polypeptide reads, in one-letter code: Cytochrome b559 subunit beta (39 aa).

A helical transmembrane segment spans residues 14-30 (WLAVHGLAVPTVFFLGS). H18 contacts heme.

The protein belongs to the PsbE/PsbF family. Heterodimer of an alpha subunit and a beta subunit. PSII is composed of 1 copy each of membrane proteins PsbA, PsbB, PsbC, PsbD, PsbE, PsbF, PsbH, PsbI, PsbJ, PsbK, PsbL, PsbM, PsbT, PsbX, PsbY, PsbZ, Psb30/Ycf12, at least 3 peripheral proteins of the oxygen-evolving complex and a large number of cofactors. It forms dimeric complexes. Heme b serves as cofactor.

The protein localises to the plastid. It localises to the chloroplast thylakoid membrane. Functionally, this b-type cytochrome is tightly associated with the reaction center of photosystem II (PSII). PSII is a light-driven water:plastoquinone oxidoreductase that uses light energy to abstract electrons from H(2)O, generating O(2) and a proton gradient subsequently used for ATP formation. It consists of a core antenna complex that captures photons, and an electron transfer chain that converts photonic excitation into a charge separation. This chain is Cytochrome b559 subunit beta, found in Cedrus deodara (Deodar cedar).